Reading from the N-terminus, the 321-residue chain is Cytoskeleton protein RodZ (321 aa).

The Cytoplasmic portion of the chain corresponds to 1–111; sequence MNTEATHDQN…LGKRRKKRDG (111 aa). Positions 19–71 constitute an HTH cro/C1-type domain; the sequence is LRNAREQLGLSQQAVAERLCLKVSTVRDIEEDKAPSDLASTFLRGYIRSYARL. Positions 30 to 49 form a DNA-binding region, H-T-H motif; sequence QQAVAERLCLKVSTVRDIEE. A helical; Signal-anchor for type II membrane protein transmembrane segment spans residues 112–132; the sequence is WLMSFTWLVLFVVVGLTGAWW. The Periplasmic portion of the chain corresponds to 133-321; sequence WQNHKAQQEE…TINAEPTSAQ (189 aa). The interval 167-190 is disordered; it reads DTRAAASQDTTPAETAPAAPVDST. Residues 176–190 show a composition bias toward low complexity; the sequence is TTPAETAPAAPVDST.

Belongs to the RodZ family.

It is found in the cell inner membrane. In terms of biological role, cytoskeletal protein that is involved in cell-shape control through regulation of the length of the long axis. The polypeptide is Cytoskeleton protein RodZ (Salmonella arizonae (strain ATCC BAA-731 / CDC346-86 / RSK2980)).